Reading from the N-terminus, the 346-residue chain is Biotin synthase (346 aa).

Residues 38 to 256 (QQVQVSTLLS…IAVARIMMPT (219 aa)) enclose the Radical SAM core domain. The [4Fe-4S] cluster site is built by cysteine 53, cysteine 57, and cysteine 60. Residues cysteine 97, cysteine 128, cysteine 188, and arginine 260 each coordinate [2Fe-2S] cluster.

It belongs to the radical SAM superfamily. Biotin synthase family. Homodimer. [4Fe-4S] cluster serves as cofactor. It depends on [2Fe-2S] cluster as a cofactor.

It catalyses the reaction (4R,5S)-dethiobiotin + (sulfur carrier)-SH + 2 reduced [2Fe-2S]-[ferredoxin] + 2 S-adenosyl-L-methionine = (sulfur carrier)-H + biotin + 2 5'-deoxyadenosine + 2 L-methionine + 2 oxidized [2Fe-2S]-[ferredoxin]. It participates in cofactor biosynthesis; biotin biosynthesis; biotin from 7,8-diaminononanoate: step 2/2. In terms of biological role, catalyzes the conversion of dethiobiotin (DTB) to biotin by the insertion of a sulfur atom into dethiobiotin via a radical-based mechanism. This chain is Biotin synthase, found in Salmonella newport (strain SL254).